The following is a 326-amino-acid chain: Meso-diaminopimelate D-dehydrogenase (326 aa).

NADP(+)-binding positions include 11 to 14 (YGNL), 35 to 37 (TRR), 69 to 72 (CGGS), 92 to 94 (SFD), and 121 to 125 (VGWDP). Residues Asp94, Asp124, Trp148, 154 to 155 (QG), Thr173, Arg199, His249, and Asn276 contribute to the substrate site.

It belongs to the diaminopimelate dehydrogenase family. As to quaternary structure, homodimer.

The enzyme catalyses meso-2,6-diaminopimelate + NADP(+) + H2O = (S)-2-amino-6-oxoheptanedioate + NH4(+) + NADPH + H(+). The protein operates within amino-acid biosynthesis; L-lysine biosynthesis via DAP pathway; DL-2,6-diaminopimelate from (S)-tetrahydrodipicolinate: step 1/1. Its activity is regulated as follows. L,L-2,6-diaminopimelate, D,D-2,6-diaminopimelate and meso-2,5-diaminoadipate competitively inhibit the oxidation of meso-2,6-diaminopimelate. L-2-amino-6-methylene-pimelate is also a potent competitive inhibitor (5 uM) of this reaction. Glyoxylate inhibits the reductive amination of L-2-amino-6-oxopimelate about 30%. The enzyme is inhibited completely by p-chloromercuribenzoate and HgCl(2) in vitro. Catalyzes the reversible NADPH-dependent reductive amination of L-2-amino-6-oxopimelate, the acyclic form of L-tetrahydrodipicolinate, to generate the meso compound, D,L-2,6-diaminopimelate. Probably plays a role in lysine biosynthesis. Exhibits a high substrate specificity, since alpha-ketoglutarate, pyruvate, oxaloacetate, glyoxylate, alpha-ketobutyrate, alpha-ketovalerate, alpha-ketocaproate, alpha-ketoisocaproate, alpha-ketoisovalerate, and phenylpyruvate are not substrates for the reductive amination reaction, and L,L-2,6-diaminopimelate, D,D-2,6-diaminopimelate, DL-alpha-aminopimelate, meso- and DL-2,5-diaminoadipate, L-djenkolate, L-cystine, L-lysine, S-(beta-aminoethy1)-L-homocysteine, L-ornithine, L-arginine, L-alpha,gamma-diaminobutyrate, L-histidine, L-phenylalanine, L-tyrosine, L-glutamate, L-aspartate, L-leucine, L-valine, L-methionine, L-serine, L-alanine, L-alpha-aminobutyrate, D-lysine, D-glutamate, D-leucine, D-alanine, D-phenylalanine, epsilon-aminocaproate, 7-aminoheptanoate, and 8-aminooctanoate are not substrates for the oxidative deamination reaction. Cannot use NAD(+) or NAD(+) analogs instead of NADP(+) for the oxidative deamination reaction. The sequence is that of Meso-diaminopimelate D-dehydrogenase (dapdh) from Lysinibacillus sphaericus (Bacillus sphaericus).